A 372-amino-acid polypeptide reads, in one-letter code: sn-glycerol-3-phosphate import ATP-binding protein UgpC (372 aa).

An ABC transporter domain is found at 2–233 (LDIKQLVKTY…PASTFVASFI (232 aa)). 35-42 (GPSGCGKS) provides a ligand contact to ATP.

The protein belongs to the ABC transporter superfamily. sn-glycerol-3-phosphate importer (TC 3.A.1.1.3) family. The complex is composed of two ATP-binding proteins (UgpC), two transmembrane proteins (UgpA and UgpE) and a solute-binding protein (UgpB).

It is found in the cell inner membrane. It catalyses the reaction sn-glycerol 3-phosphate(out) + ATP + H2O = sn-glycerol 3-phosphate(in) + ADP + phosphate + H(+). Its function is as follows. Part of the ABC transporter complex UgpBAEC involved in sn-glycerol-3-phosphate (G3P) import. Responsible for energy coupling to the transport system. This Vibrio cholerae serotype O1 (strain ATCC 39315 / El Tor Inaba N16961) protein is sn-glycerol-3-phosphate import ATP-binding protein UgpC.